A 976-amino-acid polypeptide reads, in one-letter code: Terminal uridylyltransferase 1 (976 aa).

2 disordered regions span residues 1–47 and 129–185; these read MVSK…DADF and TGRS…TTEG. Positions 1-188 are required for oligomerization and may contribute to the incorporation into the MPsome complex; the sequence is MVSKYHRLLQ…EDDTTEGPRG (188 aa). The span at 147 to 183 shows a compositional bias: acidic residues; sequence ADDESDGNLDTDGSDASEGDEVESTTDADVYGEDDTT. A C2H2-type; atypical zinc finger spans residues 190–221; that stretch reads VRLYSCDACPHAVFTTHAALLAHAEEHHADLL. Residues C195, C198, H212, and H217 each coordinate Zn(2+). Residues S298 and 309-312 contribute to the UTP site; that span reads ADID. Mg(2+) is bound by residues D310 and D312. An RNA-binding site is contributed by R358. The PAP-associated domain maps to 366–425; the sequence is ASSPILTVARRDAEDVVARSIRFILNGPATREDRLLLEGSVRDAVGPTGVQQVWWNRTSD. UTP-binding positions include 480-484, K505, K509, and 523-524; these read GIRNS and SY. Residues 652-661 carry the Nucleotide recognition motif (NRM) motif; the sequence is IEDPYEENLN. The tract at residues 700-976 is important for catalytic activity and RNA binding; the sequence is DSSGTPAAGG…SKVTPFKSPR (277 aa). Residues 732–755 form a disordered region; sequence SESRRLPQSNSDNSGRIANGDNES.

The protein belongs to the DNA polymerase type-B-like family. In terms of assembly, oligomer. Component of the mitochondrial 3' processome (MPsome) complex composed at least of terminal uridylyltransferase KRET1/TUT1, 3'-5' exonuclease DSS1, MPSS1, MPSS2 and MPSS3. Within the complex, interacts with DSS1, MPSS1 and MPSS3. The cofactor is Mg(2+). Mn(2+) serves as cofactor.

The protein resides in the mitochondrion. The catalysed reaction is RNA(n) + UTP = RNA(n)-3'-uridine ribonucleotide + diphosphate. Functionally, terminal uridylyltransferase which is involved in the post-transcriptional editing of mitochondrial RNA, a process involving the addition and deletion of uridine (U) nucleotides in the pre-RNA. Specifically, catalyzes the addition of Us to the 3'-hydroxyl group of guided RNA (gRNA), ribosomal RNA (rRNA) and some mRNAs. As part of the mitochondrial 3' processome (MPsome), catalyzes the primary 3' uridylation of gRNA precursors to facilitate their recognition and to induce their processive 3'-5' degradation by DSS1, and the secondary 3' uridylation of mature gRNAs. Involved in the 3' uridylylation of the long A/U tail of some edited and never-edited mRNAs. Promotes 3' uridylylation-mediated decay of some never-edited mRNAs. Does not mediate RNA-independent UTP polymerization. This chain is Terminal uridylyltransferase 1, found in Trypanosoma brucei brucei.